The sequence spans 63 residues: DNA gyrase inhibitor YacG (63 aa).

Zn(2+)-binding residues include C9, C12, C28, and C32.

The protein belongs to the DNA gyrase inhibitor YacG family. In terms of assembly, interacts with GyrB. Zn(2+) serves as cofactor.

Functionally, inhibits all the catalytic activities of DNA gyrase by preventing its interaction with DNA. Acts by binding directly to the C-terminal domain of GyrB, which probably disrupts DNA binding by the gyrase. In Salmonella paratyphi A (strain AKU_12601), this protein is DNA gyrase inhibitor YacG.